Reading from the N-terminus, the 432-residue chain is Adenylosuccinate synthetase (432 aa).

Residues 11 to 17 (GDEGKGK) and 39 to 41 (GHT) each bind GTP. The Proton acceptor role is filled by aspartate 12. Positions 12 and 39 each coordinate Mg(2+). Residues 12 to 15 (DEGK), 37 to 40 (NAGH), threonine 134, arginine 148, asparagine 230, threonine 245, and arginine 309 each bind IMP. Histidine 40 functions as the Proton donor in the catalytic mechanism. 305 to 311 (VTTGRKR) lines the substrate pocket. GTP is bound by residues arginine 311, 337–339 (KLD), and 419–421 (GTG).

It belongs to the adenylosuccinate synthetase family. Homodimer. The cofactor is Mg(2+).

Its subcellular location is the cytoplasm. It carries out the reaction IMP + L-aspartate + GTP = N(6)-(1,2-dicarboxyethyl)-AMP + GDP + phosphate + 2 H(+). The protein operates within purine metabolism; AMP biosynthesis via de novo pathway; AMP from IMP: step 1/2. Functionally, plays an important role in the de novo pathway and in the salvage pathway of purine nucleotide biosynthesis. Catalyzes the first committed step in the biosynthesis of AMP from IMP. This Kluyveromyces lactis (strain ATCC 8585 / CBS 2359 / DSM 70799 / NBRC 1267 / NRRL Y-1140 / WM37) (Yeast) protein is Adenylosuccinate synthetase.